The following is a 392-amino-acid chain: Nuclear speckle splicing regulatory protein 1 homolog (392 aa).

Disordered stretches follow at residues 1–73, 113–169, and 187–357; these read MASK…IFDY, RQLE…AFND, and LLND…ARLD. 5 stretches are compositionally biased toward basic and acidic residues: residues 54-65, 113-132, 149-160, 205-238, and 313-357; these read KAAEREHQKAEA, RQLEQFSREERQQLREREKE, KQQEEVKKHREQ, QKNVRKREDSDEEIDPKPEKSDKKPAEKLKKSIY, and KSIE…ARLD. Residues 76-132 are a coiled coil; that stretch reads NYDEIQAIKNEKKEEARKADKNRESKYAENIIKAHARRQLEQFSREERQQLREREKE.

Belongs to the NSRP1 family. As to expression, expressed in the intestine, nervous system and head neurons in both larvae and adults. Expressed in the distal tip cell.

The protein localises to the cytoplasm. Its subcellular location is the nucleus. Required for the cessation of distal tip cell migration at the end of larval morphogenesis. The sequence is that of Nuclear speckle splicing regulatory protein 1 homolog (ccdc-55) from Caenorhabditis elegans.